Reading from the N-terminus, the 239-residue chain is Ubiquinone biosynthesis O-methyltransferase (239 aa).

Residues Arg44, Gly63, Asp84, and Met128 each contribute to the S-adenosyl-L-methionine site.

Belongs to the methyltransferase superfamily. UbiG/COQ3 family.

The enzyme catalyses a 3-demethylubiquinol + S-adenosyl-L-methionine = a ubiquinol + S-adenosyl-L-homocysteine + H(+). It catalyses the reaction a 3-(all-trans-polyprenyl)benzene-1,2-diol + S-adenosyl-L-methionine = a 2-methoxy-6-(all-trans-polyprenyl)phenol + S-adenosyl-L-homocysteine + H(+). It participates in cofactor biosynthesis; ubiquinone biosynthesis. Its function is as follows. O-methyltransferase that catalyzes the 2 O-methylation steps in the ubiquinone biosynthetic pathway. The sequence is that of Ubiquinone biosynthesis O-methyltransferase from Xanthomonas oryzae pv. oryzae (strain MAFF 311018).